The chain runs to 131 residues: MNYEVNKSDEDWKKELTPEQYRILRQKGTEMAFTGALYKNQDKGTYVCAACGAVLFSSDTKYESGSGWPSFYQPVKDGVVDKQKDSSHGMERTEILCSKCGGHLGHVFNDGPRPTGLRYCINSASLKFQKE.

A MsrB domain is found at 9–131 (DEDWKKELTP…NSASLKFQKE (123 aa)). Residues Cys48, Cys51, Cys97, and Cys100 each coordinate Zn(2+). Cys120 (nucleophile) is an active-site residue.

This sequence belongs to the MsrB Met sulfoxide reductase family. Requires Zn(2+) as cofactor.

It catalyses the reaction L-methionyl-[protein] + [thioredoxin]-disulfide + H2O = L-methionyl-(R)-S-oxide-[protein] + [thioredoxin]-dithiol. This is Peptide methionine sulfoxide reductase MsrB from Leptospira interrogans serogroup Icterohaemorrhagiae serovar Lai (strain 56601).